The chain runs to 150 residues: S-protein homolog 28 (150 aa).

Residue Asn-122 is glycosylated (N-linked (GlcNAc...) asparagine).

Belongs to the plant self-incompatibility (S1) protein family.

The protein localises to the secreted. This chain is S-protein homolog 28, found in Arabidopsis thaliana (Mouse-ear cress).